The chain runs to 184 residues: Ribosome-recycling factor (184 aa).

It belongs to the RRF family.

Its subcellular location is the cytoplasm. Its function is as follows. Responsible for the release of ribosomes from messenger RNA at the termination of protein biosynthesis. May increase the efficiency of translation by recycling ribosomes from one round of translation to another. The polypeptide is Ribosome-recycling factor (Leptospira borgpetersenii serovar Hardjo-bovis (strain JB197)).